The chain runs to 317 residues: Sulfate adenylyltransferase subunit 2 (317 aa).

2 disordered regions span residues 1–21 (MPDS…APLD) and 298–317 (RAID…EGYF).

The protein belongs to the PAPS reductase family. CysD subfamily. As to quaternary structure, heterodimer composed of CysD, the smaller subunit, and CysN.

It catalyses the reaction sulfate + ATP + H(+) = adenosine 5'-phosphosulfate + diphosphate. Its pathway is sulfur metabolism; hydrogen sulfide biosynthesis; sulfite from sulfate: step 1/3. In terms of biological role, with CysN forms the ATP sulfurylase (ATPS) that catalyzes the adenylation of sulfate producing adenosine 5'-phosphosulfate (APS) and diphosphate, the first enzymatic step in sulfur assimilation pathway. APS synthesis involves the formation of a high-energy phosphoric-sulfuric acid anhydride bond driven by GTP hydrolysis by CysN coupled to ATP hydrolysis by CysD. This Rhizobium etli (strain CIAT 652) protein is Sulfate adenylyltransferase subunit 2.